Consider the following 1482-residue polypeptide: Cystic fibrosis transmembrane conductance regulator (1482 aa).

The Cytoplasmic portion of the chain corresponds to 1–77 (MQRSPLEKAS…KLINALRRCF (77 aa)). A helical membrane pass occupies residues 78 to 98 (FWRFMFYGILLYLGEVTKAVQ). The 285-residue stretch at 81 to 365 (FMFYGILLYL…WAVQTWYDSL (285 aa)) folds into the ABC transmembrane type-1 1 domain. Residues 99 to 122 (PLLLGRIIASYDPDNKVERSIAIY) are Extracellular-facing. A helical membrane pass occupies residues 123 to 146 (LGIGLCLLFIVRTLLLHPAIFGLH). The Cytoplasmic segment spans residues 147-195 (HIGMQMRIAMFSLIYKKILKLSSRVLDKISIGQLVSLLSNNLNKFDEGL). A helical transmembrane segment spans residues 196–216 (ALAHFVWIAPLQVTLLMGLLW). The Extracellular portion of the chain corresponds to 217–222 (ELLQAS). Residues 223 to 243 (AFCGLGFLIVLALVQAGLGRM) form a helical membrane-spanning segment. Over 244–298 (MMKYRDQRAGKINERLVITSEMIENIQSVKAYCWEEAMEKMIENLRQTELKLTRK) the chain is Cytoplasmic. A helical transmembrane segment spans residues 299-319 (AAYVRYFNSSAFFFSGFFVVF). The Extracellular segment spans residues 320–339 (LSVLPYALIKGIILRKIFTT). A helical membrane pass occupies residues 340-358 (ISFCIVLRMAVTRQFPWAV). The Cytoplasmic portion of the chain corresponds to 359 to 859 (QTWYDSLGAI…YLRYLAVNKS (501 aa)). ATP-binding positions include tryptophan 401, 458–465 (GSTGAGKT), and glutamine 493. The ABC transporter 1 domain occupies 423–646 (NGDNSLFFSN…RPDFSSKLMG (224 aa)). Cysteine 524 carries S-palmitoyl cysteine lipidation. Phosphoserine occurs at positions 549 and 660. A disordered R region region spans residues 654 to 832 (SAERRNSILT…EEINEEYLKE (179 aa)). Position 670 is a phosphoserine; by PKA (serine 670). Serine 686 carries the post-translational modification Phosphoserine. Lysine 688 participates in a covalent cross-link: Glycyl lysine isopeptide (Lys-Gly) (interchain with G-Cter in ubiquitin). Serine 700 and serine 712 each carry phosphoserine. Threonine 717 bears the Phosphothreonine mark. A phosphoserine mark is found at serine 738, serine 769, serine 791, serine 796, and serine 814. Residues 860 to 880 (LSLVLIWCLVIFLAEVAISLA) form a helical membrane-spanning segment. The 297-residue stretch at 860–1156 (LSLVLIWCLV…AVNSSIDVDS (297 aa)) folds into the ABC transmembrane type-1 2 domain. Over 881-919 (VLLLLDKSPRYSKGNGTASGNGSSAVIITSTSSYYLFYI) the chain is Extracellular. 2 N-linked (GlcNAc...) asparagine glycosylation sites follow: asparagine 895 and asparagine 901. Residues 920-940 (YVGVADTLLALGFFRGLPLVH) traverse the membrane as a discontinuously helical segment. Over 941-991 (TLITVSKILHHRMLHSVLRAPMSTLNMLKAGGILNRFSKDIAILDDLLPLT) the chain is Cytoplasmic. A helical membrane pass occupies residues 992-1012 (IFDFVQLLLIVIGAVAVVSVL). Topologically, residues 1013–1014 (QP) are extracellular. A helical transmembrane segment spans residues 1015 to 1035 (YIFLATVPVIAAFVILRGYFL). The Cytoplasmic segment spans residues 1036–1096 (HTSQQLKQLE…TANWFLYLST (61 aa)). A helical transmembrane segment spans residues 1097 to 1117 (LRWFQMRIEMIFVVFFIAVTF). Over 1118–1131 (ISILTTGEGEGTVG) the chain is Extracellular. The chain crosses the membrane as a helical span at residues 1132-1152 (IILTLAMNIMGTLQWAVNSSI). At 1153 to 1482 (DVDSLMRSVS…TEEEVQETRL (330 aa)) the chain is on the cytoplasmic side. The region spanning 1212-1445 (MTVKDLTARY…KSLFRQAISP (234 aa)) is the ABC transporter 2 domain. ATP contacts are provided by residues tyrosine 1221 and 1246–1253 (GRTGAGKS). The interaction with GORASP2 stretch occupies residues 1388-1482 (RTLKQAFADC…TEEEVQETRL (95 aa)). Cysteine 1397 carries S-palmitoyl cysteine lipidation. Phosphoserine occurs at positions 1446 and 1458. Residues 1450 to 1482 (KLFPRRNSSKHKSRSPITALKEETEEEVQETRL) form a disordered region. Residues 1451–1463 (LFPRRNSSKHKSR) are compositionally biased toward basic residues. The segment covering 1472–1482 (ETEEEVQETRL) has biased composition (acidic residues). The short motif at 1480–1482 (TRL) is the PDZ-binding element.

This sequence belongs to the ABC transporter superfamily. ABCC family. CFTR transporter (TC 3.A.1.202) subfamily. As to quaternary structure, monomer; does not require oligomerization for channel activity. May form oligomers in the membrane. Interacts with SLC26A3, SLC26A6 and NHERF1. Interacts with SHANK2. Interacts with MYO6. Interacts (via C-terminus) with GOPC (via PDZ domain); this promotes CFTR internalization and thereby decreases channel activity. Interacts with SLC4A7 through NHERF1. Found in a complex with MYO5B and RAB11A. Interacts with ANO1. Interacts with SLC26A8. Interacts with AHCYL1; the interaction increases CFTR activity. Interacts with CSE1L. The core-glycosylated form interacts with GORASP2 (via PDZ GRASP-type 1 domain) in respone to ER stress. Interacts with MARCHF2; the interaction leads to CFTR ubiqtuitination and degradation. Interacts with ADGRG2. Post-translationally, N-glycosylated. Phosphorylated; cAMP treatment promotes phosphorylation and activates the channel. Dephosphorylation decreases the ATPase activity (in vitro). Phosphorylation at PKA sites activates the channel. Phosphorylation at PKC sites enhances the response to phosphorylation by PKA. Phosphorylated by AMPK; this inhibits channel activity. In terms of processing, ubiquitinated, leading to its degradation in the lysosome. Deubiquitination by USP10 in early endosomes enhances its endocytic recycling to the cell membrane. Ubiquitinated by RNF185 during ER stress. Ubiquitinated by MARCHF2.

The protein resides in the apical cell membrane. Its subcellular location is the early endosome membrane. It localises to the cell membrane. It is found in the recycling endosome membrane. The protein localises to the endoplasmic reticulum membrane. The protein resides in the nucleus. It carries out the reaction ATP + H2O + closed Cl(-) channel = ADP + phosphate + open Cl(-) channel.. It catalyses the reaction chloride(in) = chloride(out). The enzyme catalyses hydrogencarbonate(in) = hydrogencarbonate(out). The catalysed reaction is ATP + H2O = ADP + phosphate + H(+). Epithelial ion channel that plays an important role in the regulation of epithelial ion and water transport and fluid homeostasis. Mediates the transport of chloride ions across the cell membrane. Possesses an intrinsic ATPase activity and utilizes ATP to gate its channel; the passive flow of anions through the channel is gated by cycles of ATP binding and hydrolysis by the ATP-binding domains. The ion channel is also permeable to HCO(3)(-); selectivity depends on the extracellular chloride concentration. Exerts its function also by modulating the activity of other ion channels and transporters. Contributes to the regulation of the pH and the ion content of the epithelial fluid layer. Modulates the activity of the epithelial sodium channel (ENaC) complex, in part by regulating the cell surface expression of the ENaC complex. May regulate bicarbonate secretion and salvage in epithelial cells by regulating the transporter SLC4A7. Can inhibit the chloride channel activity of ANO1. Plays a role in the chloride and bicarbonate homeostasis during sperm epididymal maturation and capacitation. This is Cystic fibrosis transmembrane conductance regulator from Otolemur garnettii (Small-eared galago).